We begin with the raw amino-acid sequence, 627 residues long: tRNA uridine 5-carboxymethylaminomethyl modification enzyme MnmG (627 aa).

FAD-binding positions include 13–18, V125, and S180; that span reads GGGHAG. 274–288 is an NAD(+) binding site; it reads GPRYCPSIEDKVVRF. An FAD-binding site is contributed by Q371.

It belongs to the MnmG family. In terms of assembly, homodimer. Heterotetramer of two MnmE and two MnmG subunits. It depends on FAD as a cofactor.

The protein localises to the cytoplasm. Its function is as follows. NAD-binding protein involved in the addition of a carboxymethylaminomethyl (cmnm) group at the wobble position (U34) of certain tRNAs, forming tRNA-cmnm(5)s(2)U34. The protein is tRNA uridine 5-carboxymethylaminomethyl modification enzyme MnmG of Francisella philomiragia subsp. philomiragia (strain ATCC 25017 / CCUG 19701 / FSC 153 / O#319-036).